Reading from the N-terminus, the 120-residue chain is Ribosome-binding factor A (120 aa).

It belongs to the RbfA family. As to quaternary structure, monomer. Binds 30S ribosomal subunits, but not 50S ribosomal subunits or 70S ribosomes.

The protein resides in the cytoplasm. One of several proteins that assist in the late maturation steps of the functional core of the 30S ribosomal subunit. Associates with free 30S ribosomal subunits (but not with 30S subunits that are part of 70S ribosomes or polysomes). Required for efficient processing of 16S rRNA. May interact with the 5'-terminal helix region of 16S rRNA. This is Ribosome-binding factor A from Rickettsia peacockii (strain Rustic).